A 258-amino-acid polypeptide reads, in one-letter code: tRNA pseudouridine synthase A (258 aa).

The active-site Nucleophile is the aspartate 53. Tyrosine 111 is a binding site for substrate.

Belongs to the tRNA pseudouridine synthase TruA family. In terms of assembly, homodimer.

It catalyses the reaction uridine(38/39/40) in tRNA = pseudouridine(38/39/40) in tRNA. Its function is as follows. Formation of pseudouridine at positions 38, 39 and 40 in the anticodon stem and loop of transfer RNAs. This is tRNA pseudouridine synthase A from Streptococcus agalactiae serotype Ia (strain ATCC 27591 / A909 / CDC SS700).